The chain runs to 385 residues: Basigin (385 aa).

Residues 1–21 (MAAALFVLLGFALLGTHGASG) form the signal peptide. The 84-residue stretch at 37–120 (GGSVELHCEA…SNDPDRNHLT (84 aa)) folds into the Ig-like domain. 3 disulfides stabilise this stretch: Cys44-Cys108, Cys157-Cys203, and Cys242-Cys301. The region spanning 138-219 (EPGTVFTTVE…MGTANIQLHG (82 aa)) is the Ig-like C2-type domain. The Extracellular portion of the chain corresponds to 138 to 323 (EPGTVFTTVE…ITLRVRSHLA (186 aa)). Asn160 carries N-linked (GlcNAc...) asparagine glycosylation. Residues 195-199 (DDQWG) form an essential for interaction with KDR/VEGFR2 region. Positions 221–315 (PRVKAVKSSE…SKGSDQAIIT (95 aa)) constitute an Ig-like V-type domain. N-linked (GlcNAc...) asparagine glycans are attached at residues Asn268 and Asn302. Residues 324–344 (ALWPFLGIVAEVLVLVTIIFI) form a helical membrane-spanning segment. The Cytoplasmic portion of the chain corresponds to 345–385 (YEKRRKPEDVLDDDDAGSAPLKSSGQHQNDKGKNVRQRNSS). Residues 353-385 (DVLDDDDAGSAPLKSSGQHQNDKGKNVRQRNSS) form a disordered region. A phosphoserine mark is found at Ser362 and Ser368.

In terms of assembly, homooligomer. Interacts with NXNL1. Interacts with SLC2A1 and SLC16A1/GLUT1. Interacts with XKR8; promoting its localization at the cell membrane. (Microbial infection) Interacts with P.falciparum (isolate 3D7) RH5/PfRH5; the interaction is required for the invasion of the host erythrocytes by the parasite at the merozoite stage. As to quaternary structure, homooligomer. Forms heterooligomers with isoform 3. Interacts with VEGFA and KDR/VEGFR2. Interacts with PPIA/CYPA. Interacts with PPIL2; regulates BSG transport to the cell membrane. Interacts with SLC16A1; interaction mediates SLC16A3 targeting to the plasma membrane. Interacts with SLC16A12. Interacts with SLC16A11. Interacts with AJAP1. Interacts with SLC1A3, ATP1B2, MAG and L1CAM. Interacts with SLC16A3; interaction mediates SLC16A3 targeting to the plasma membrane. In terms of assembly, (Microbial infection) Interacts with P.falciparum (isolates 3D7 or 7G8) RH5/PfRH5; the interaction is required for the invasion of the host erythrocytes by the parasite at the merozoite stage. (Microbial infection) Does not interact with severe acute respiratory syndrome coronavirus 2 (SARS-CoV-2) spike glycoprotein, even if previous works were based on a putative interaction. As to quaternary structure, forms heterooligomers with isoform 2. In terms of assembly, interacts with SLC16A6; this interaction mediates targeting to the plasma membrane. N-glycosylated. As to expression, retina-specific. Expressed in retinal cone photoreceptors (at protein level). Expressed in erythrocytes (at protein level). Highly expressed in melanoma cell lines (at protein level). Highly expressed in the heart, kidney, skeletal muscle and testis. In terms of tissue distribution, highly expressed in the bone marrow, fetal liver, lung, testis and thymus.

It localises to the melanosome. It is found in the cell membrane. The protein resides in the photoreceptor inner segment. The protein localises to the cell projection. Its subcellular location is the cilium. It localises to the photoreceptor outer segment. It is found in the endosome. The protein resides in the endoplasmic reticulum membrane. The protein localises to the basolateral cell membrane. Its function is as follows. Essential for normal retinal maturation and development. Acts as a retinal cell surface receptor for NXNL1 and plays an important role in NXNL1-mediated survival of retinal cone photoreceptors. In association with glucose transporter SLC16A1/GLUT1 and NXNL1, promotes retinal cone survival by enhancing aerobic glycolysis and accelerating the entry of glucose into photoreceptors. May act as a potent stimulator of IL6 secretion in multiple cell lines that include monocytes. (Microbial infection) Erythrocyte receptor for P.falciparum RH5 which is essential for erythrocyte invasion by the merozoite stage of P.falciparum isolates 3D7 and Dd2. Functionally, signaling receptor for cyclophilins, essential for PPIA/CYPA and PPIB/CYPB-dependent signaling related to chemotaxis and adhesion of immune cells. Plays an important role in targeting monocarboxylate transporters SLC16A1/GLUT1, SLC16A11 and SLC16A12 to the plasma membrane. Acts as a coreceptor for vascular endothelial growth factor receptor 2 (KDR/VEGFR2) in endothelial cells enhancing its VEGFA-mediated activation and downstream signaling. Promotes angiogenesis through EPAS1/HIF2A-mediated up-regulation of VEGFA (isoform VEGF-165 and VEGF-121) and KDR/VEGFR2 in endothelial cells. Plays a key role in regulating tumor growth, invasion, metastasis and neoangiogenesis by stimulating the production and release of extracellular matrix metalloproteinases and KDR/VEGFR2 by both tumor cells and stromal cells (fibroblasts and endothelial cells). In terms of biological role, (Microbial infection) Erythrocyte receptor for P.falciparum RH5 which is essential for erythrocyte invasion by the merozoite stage of P.falciparum isolates 3D7, Dd2, 7G8 and HB3. Binding of P.falciparum RH5 results in BSG dimerization which triggers an increase in intracellular Ca(2+) in the erythrocyte. This essential step leads to a rearrangement of the erythrocyte cytoskeleton required for the merozoite invasion. Its function is as follows. (Microbial infection) Can facilitate human SARS coronavirus (SARS-CoV-1) infection via its interaction with virus-associated PPIA/CYPA. (Microbial infection) Can facilitate HIV-1 infection via its interaction with virus-associated PPIA/CYPA. Functionally, (Microbial infection) First described as a receptor for severe acute respiratory syndrome coronavirus 2 (SARS-CoV-2), it is not required for SARS-CoV-2 infection. In terms of biological role, (Microbial infection) Acts as a receptor for measles virus. Its function is as follows. (Microbial infection) Promotes entry of pentamer-expressing human cytomegalovirus (HCMV) into epithelial and endothelial cells. The chain is Basigin from Homo sapiens (Human).